The chain runs to 344 residues: Dihydroorotate dehydrogenase (quinone) (344 aa).

FMN is bound by residues 61 to 65 (AGLDK) and threonine 85. Lysine 65 provides a ligand contact to substrate. 110-114 (NRMGF) is a binding site for substrate. FMN is bound by residues asparagine 138 and asparagine 171. Asparagine 171 is a binding site for substrate. Serine 174 functions as the Nucleophile in the catalytic mechanism. Asparagine 176 lines the substrate pocket. Positions 216 and 244 each coordinate FMN. 245 to 246 (NT) contributes to the substrate binding site. FMN is bound by residues glycine 267, glycine 296, and 317 to 318 (YS).

This sequence belongs to the dihydroorotate dehydrogenase family. Type 2 subfamily. Monomer. FMN is required as a cofactor.

It is found in the cell membrane. It carries out the reaction (S)-dihydroorotate + a quinone = orotate + a quinol. It functions in the pathway pyrimidine metabolism; UMP biosynthesis via de novo pathway; orotate from (S)-dihydroorotate (quinone route): step 1/1. Catalyzes the conversion of dihydroorotate to orotate with quinone as electron acceptor. This chain is Dihydroorotate dehydrogenase (quinone), found in Psychrobacter cryohalolentis (strain ATCC BAA-1226 / DSM 17306 / VKM B-2378 / K5).